Here is a 564-residue protein sequence, read N- to C-terminus: Chaperonin GroEL 2 (564 aa).

ATP contacts are provided by residues Thr-29–Pro-32, Asp-86–Thr-90, Gly-413, and Asp-493. The interval Asp-521–Gly-541 is disordered. Residues Gly-530–Gly-541 are compositionally biased toward gly residues.

It belongs to the chaperonin (HSP60) family. As to quaternary structure, forms a cylinder of 14 subunits composed of two heptameric rings stacked back-to-back. Interacts with the co-chaperonin GroES.

It is found in the cytoplasm. It catalyses the reaction ATP + H2O + a folded polypeptide = ADP + phosphate + an unfolded polypeptide.. Together with its co-chaperonin GroES, plays an essential role in assisting protein folding. The GroEL-GroES system forms a nano-cage that allows encapsulation of the non-native substrate proteins and provides a physical environment optimized to promote and accelerate protein folding. The chain is Chaperonin GroEL 2 from Prochlorococcus marinus (strain MIT 9303).